The sequence spans 24 residues: Humanin-like 12 (24 aa).

Belongs to the humanin family.

The protein localises to the secreted. Its subcellular location is the cytoplasm. In terms of biological role, plays a role as a neuroprotective and antiapoptotic factor. This chain is Humanin-like 12, found in Homo sapiens (Human).